Consider the following 140-residue polypeptide: Auxin-responsive protein IAA26 (140 aa).

The segment at 1–40 is disordered; the sequence is MASYGDDGVELTELTLGPPGASARRARRGRKNGHPPPSSS. The short motif at 14–18 is the EAR-like (transcriptional repression) element; sequence LTLGP. A compositionally biased stretch (basic residues) spans 24-33; it reads RRARRGRKNG. Positions 45-130 constitute a PB1 domain; that stretch reads AYFVKVSMDG…SCKRMRVMRA (86 aa).

It belongs to the Aux/IAA family. Homodimers and heterodimers. In terms of tissue distribution, expressed in roots, seedlings and flowers.

It localises to the nucleus. In terms of biological role, aux/IAA proteins are short-lived transcriptional factors that function as repressors of early auxin response genes at low auxin concentrations. In Oryza sativa subsp. japonica (Rice), this protein is Auxin-responsive protein IAA26 (IAA26).